The primary structure comprises 666 residues: NAD(P)H-quinone oxidoreductase subunit 5, organellar chromatophore 1 (666 aa).

The next 15 membrane-spanning stretches (helical) occupy residues 8 to 28, 41 to 61, 90 to 110, 121 to 141, 145 to 165, 190 to 210, 220 to 240, 259 to 279, 293 to 313, 328 to 348, 396 to 416, 428 to 448, 497 to 517, 542 to 562, and 643 to 663; these read LVWL…FGLI, AALL…MVLA, VDPI…LVMV, SYVR…ALIL, LLEI…LIGF, FLLG…QIVA, GSIP…GPMA, TPIS…FLVA, IIVA…ALIQ, LGYM…FHLI, GITF…AGFW, SYPL…FYMF, TLPL…GSPW, FLPL…IATI, and GRPQ…IVIF.

It belongs to the complex I subunit 5 family. In terms of assembly, NDH is composed of at least 16 different subunits, 5 of which are encoded in the nucleus.

It localises to the plastid. It is found in the organellar chromatophore thylakoid membrane. It carries out the reaction a plastoquinone + NADH + (n+1) H(+)(in) = a plastoquinol + NAD(+) + n H(+)(out). It catalyses the reaction a plastoquinone + NADPH + (n+1) H(+)(in) = a plastoquinol + NADP(+) + n H(+)(out). Functionally, NDH shuttles electrons from NAD(P)H:plastoquinone, via FMN and iron-sulfur (Fe-S) centers, to quinones in the photosynthetic chain and possibly in a chloroplast respiratory chain. The immediate electron acceptor for the enzyme in this species is believed to be plastoquinone. Couples the redox reaction to proton translocation, and thus conserves the redox energy in a proton gradient. This chain is NAD(P)H-quinone oxidoreductase subunit 5, organellar chromatophore 1 (ndhF1), found in Paulinella chromatophora.